Here is a 45-residue protein sequence, read N- to C-terminus: Scolopendra 20417.15 Da toxin (45 aa).

A disordered region spans residues 26–45 (KVANGQEAGQPGAXNMKELH).

It belongs to the CRISP family. Venom allergen 5-like subfamily. Contains 3 disulfide bonds. In terms of tissue distribution, expressed by the venom gland.

The protein localises to the secreted. This is Scolopendra 20417.15 Da toxin from Scolopendra viridicornis nigra (Brazilian giant centipede).